A 330-amino-acid polypeptide reads, in one-letter code: D-cysteine desulfhydrase (330 aa).

An N6-(pyridoxal phosphate)lysine modification is found at K52.

Belongs to the ACC deaminase/D-cysteine desulfhydrase family. In terms of assembly, homodimer. Pyridoxal 5'-phosphate serves as cofactor.

It carries out the reaction D-cysteine + H2O = hydrogen sulfide + pyruvate + NH4(+) + H(+). In terms of biological role, catalyzes the alpha,beta-elimination reaction of D-cysteine and of several D-cysteine derivatives. It could be a defense mechanism against D-cysteine. This Yersinia enterocolitica serotype O:8 / biotype 1B (strain NCTC 13174 / 8081) protein is D-cysteine desulfhydrase.